We begin with the raw amino-acid sequence, 310 residues long: Sporozoite surface protein P36 (310 aa).

The N-terminal stretch at M1–M24 is a signal peptide. 6-Cys domains are found at residues A25–T157 and Y168–A309. 6 disulfide bridges follow: C38/C48, C62/C137, C80/C135, C172/C196, C210/C291, and C227/C289. Residues N72, N114, and N118 are each glycosylated (N-linked (GlcNAc...) asparagine). A glycan (N-linked (GlcNAc...) asparagine) is linked at N290.

It is found in the cell surface. It localises to the cell membrane. Functionally, involved in sporozoite infection of hepatocytes and replication therein. The protein is Sporozoite surface protein P36 (P36) of Plasmodium yoelii yoelii.